Consider the following 85-residue polypeptide: Small ribosomal subunit protein bS16 (85 aa).

Belongs to the bacterial ribosomal protein bS16 family.

The chain is Small ribosomal subunit protein bS16 from Buchnera aphidicola subsp. Schizaphis graminum (strain Sg).